The following is a 121-amino-acid chain: Alpha-lactalbumin (121 aa).

The C-type lysozyme domain occupies I1–C121. 4 cysteine pairs are disulfide-bonded: C6-C121, C28-C112, C61-C77, and C73-C91. N-linked (GlcNAc...) asparagine glycosylation is present at N44. Ca(2+) is bound by residues K79, D82, D84, D87, and D88.

The protein belongs to the glycosyl hydrolase 22 family. Lactose synthase (LS) is a heterodimer of a catalytic component, beta1,4-galactosyltransferase (beta4Gal-T1) and a regulatory component, alpha-lactalbumin (LA). Mammary gland specific. Secreted in milk.

The protein localises to the secreted. Its function is as follows. Regulatory subunit of lactose synthase, changes the substrate specificity of galactosyltransferase in the mammary gland making glucose a good acceptor substrate for this enzyme. This enables LS to synthesize lactose, the major carbohydrate component of milk. In other tissues, galactosyltransferase transfers galactose onto the N-acetylglucosamine of the oligosaccharide chains in glycoproteins. The sequence is that of Alpha-lactalbumin (LALBA) from Notamacropus rufogriseus (Red-necked wallaby).